The chain runs to 1439 residues: Receptor-type tyrosine-protein phosphatase kappa (1439 aa).

A signal peptide spans 1–26; that stretch reads MDTTAAAALPAFVALLLLSPWPLLGS. Residues 27–752 are Extracellular-facing; it reads AQGQFSAGGC…PAKQTDRVVK (726 aa). Positions 31-194 constitute an MAM domain; it reads FSAGGCTFDD…IQVLSYPCDK (164 aa). 3 N-linked (GlcNAc...) asparagine glycosylation sites follow: N101, N140, and N211. The 86-residue stretch at 196–281 folds into the Ig-like C2-type domain; sequence PHFLRLGDVE…TQSERGSGVS (86 aa). C216 and C270 are oxidised to a cystine. 4 consecutive Fibronectin type-III domains span residues 294–389, 392–488, 491–595, and 597–680; these read PIAP…CAEP, TPKT…TDED, GPVP…SAPT, and PDYE…GNLP. N-linked (GlcNAc...) asparagine glycosylation is found at N416, N424, N436, N462, N552, N586, N590, N607, and N690. Residues 753-774 form a helical membrane-spanning segment; it reads IAGISAGILVFILLLLVVILIV. The Cytoplasmic segment spans residues 775 to 1439; that stretch reads KKSKLAKKRK…DVALEYLESS (665 aa). S856 bears the Phosphoserine mark. 2 consecutive Tyrosine-protein phosphatase domains span residues 887 to 1141 and 1173 to 1435; these read FKEE…ILEA and LKDE…ALEY. Residues D1050, 1082–1088, and Q1126 contribute to the substrate site; that span reads CSAGAGR. C1082 acts as the Phosphocysteine intermediate in catalysis. C1376 serves as the catalytic Phosphocysteine intermediate.

This sequence belongs to the protein-tyrosine phosphatase family. Receptor class 2B subfamily. Post-translationally, this protein undergoes proteolytic processing. As to expression, high levels in lung, brain and colon; less in liver, pancreas, stomach, kidney, placenta and mammary carcinoma.

The protein resides in the cell junction. Its subcellular location is the adherens junction. The protein localises to the cell membrane. It carries out the reaction O-phospho-L-tyrosyl-[protein] + H2O = L-tyrosyl-[protein] + phosphate. Its function is as follows. Regulation of processes involving cell contact and adhesion such as growth control, tumor invasion, and metastasis. Negative regulator of EGFR signaling pathway. Forms complexes with beta-catenin and gamma-catenin/plakoglobin. Beta-catenin may be a substrate for the catalytic activity of PTPRK/PTP-kappa. This is Receptor-type tyrosine-protein phosphatase kappa (PTPRK) from Homo sapiens (Human).